A 312-amino-acid chain; its full sequence is D-alanine--D-alanine ligase (312 aa).

The ATP-grasp domain occupies 102 to 307 (KKIFKMEGIP…FPELTDRLIK (206 aa)). Residue 136–191 (IKEVGVPAVVKANTQGSTIGITFVHVKEKMAEAIESALKYDQDVLVEQFVAGTEVT) participates in ATP binding. Residues Asp262, Glu274, and Asn276 each coordinate Mg(2+).

This sequence belongs to the D-alanine--D-alanine ligase family. The cofactor is Mg(2+). Mn(2+) serves as cofactor.

It localises to the cytoplasm. It carries out the reaction 2 D-alanine + ATP = D-alanyl-D-alanine + ADP + phosphate + H(+). It functions in the pathway cell wall biogenesis; peptidoglycan biosynthesis. Functionally, cell wall formation. The protein is D-alanine--D-alanine ligase of Desulforamulus reducens (strain ATCC BAA-1160 / DSM 100696 / MI-1) (Desulfotomaculum reducens).